Consider the following 120-residue polypeptide: C-C motif chemokine 23 (120 aa).

The first 21 residues, 1–21 (MKVSVAALSCLMLVTALGSQA), serve as a signal peptide directing secretion. Disulfide bonds link Cys54/Cys78, Cys55/Cys94, and Cys65/Cys105.

It belongs to the intercrine beta (chemokine CC) family. In terms of processing, the N-terminal is proteolytically cleaved by proteases associated with inflammatory responses. The processed forms, CCL23(19-99), CCL23(22-99), CCL23(27-99) and CCL23(30-99) exhibit increase in CCR1-mediated signaling and chemotaxis assays in vitro. High levels in adult lung, liver, skeletal muscle and pancreas. Moderate levels in fetal liver, adult bone marrow and placenta. The short form is the major species and the longer form was detected only in very low abundance. CCL23(19-99), CCL23(22-99), CCL23(27-99), CCL23(30-99) are found in high levels in synovial fluids from rheumatoid patients.

Its subcellular location is the secreted. Shows chemotactic activity for monocytes, resting T-lymphocytes, and neutrophils, but not for activated lymphocytes. Inhibits proliferation of myeloid progenitor cells in colony formation assays. This protein can bind heparin. Binds CCR1. CCL23(19-99), CCL23(22-99), CCL23(27-99), CCL23(30-99) are more potent chemoattractants than CCL23. The chain is C-C motif chemokine 23 (CCL23) from Homo sapiens (Human).